A 403-amino-acid chain; its full sequence is Putative F-box protein At5g41500 (403 aa).

An F-box domain is found at 2–47 (ATTISNLPRELIEEILSRVPLRAMKAMRLTCKSWNNLSKSESFMKM).

The sequence is that of Putative F-box protein At5g41500 from Arabidopsis thaliana (Mouse-ear cress).